Reading from the N-terminus, the 286-residue chain is ATP synthase gamma chain (286 aa).

Belongs to the ATPase gamma chain family. As to quaternary structure, F-type ATPases have 2 components, CF(1) - the catalytic core - and CF(0) - the membrane proton channel. CF(1) has five subunits: alpha(3), beta(3), gamma(1), delta(1), epsilon(1). CF(0) has three main subunits: a, b and c.

The protein resides in the cell inner membrane. Functionally, produces ATP from ADP in the presence of a proton gradient across the membrane. The gamma chain is believed to be important in regulating ATPase activity and the flow of protons through the CF(0) complex. The sequence is that of ATP synthase gamma chain from Alteromonas mediterranea (strain DSM 17117 / CIP 110805 / LMG 28347 / Deep ecotype).